Here is a 248-residue protein sequence, read N- to C-terminus: MEAVILFPAIDLKNGQCVRLEQGDMARATVFNLNPAAQAQSFAEQGFEYLHVVDLDGAFAGKPVNAQAVEAMLKTIKIPVQLGGGIRDLATVEAWLEKGITRVIIGTAAVRDPDLVKAAAKKFPGRVAVGLDARDGKVAVEGWAETSQVTALEIAQRFEDAGVAAIIFTDIARDGLLKGLNLDATIALADSISIPVIASGGLASIDDVKAMLTPRAKKLAGAIAGRALYDGRLDPAAALTLIRNARAA.

Aspartate 11 serves as the catalytic Proton acceptor. Aspartate 132 functions as the Proton donor in the catalytic mechanism.

Belongs to the HisA/HisF family.

It localises to the cytoplasm. It carries out the reaction 1-(5-phospho-beta-D-ribosyl)-5-[(5-phospho-beta-D-ribosylamino)methylideneamino]imidazole-4-carboxamide = 5-[(5-phospho-1-deoxy-D-ribulos-1-ylimino)methylamino]-1-(5-phospho-beta-D-ribosyl)imidazole-4-carboxamide. Its pathway is amino-acid biosynthesis; L-histidine biosynthesis; L-histidine from 5-phospho-alpha-D-ribose 1-diphosphate: step 4/9. In Bradyrhizobium diazoefficiens (strain JCM 10833 / BCRC 13528 / IAM 13628 / NBRC 14792 / USDA 110), this protein is 1-(5-phosphoribosyl)-5-[(5-phosphoribosylamino)methylideneamino] imidazole-4-carboxamide isomerase.